The primary structure comprises 230 residues: Ion-translocating oxidoreductase complex subunit E (230 aa).

6 consecutive transmembrane segments (helical) span residues 11–31 (GMWA…LLAV), 39–59 (LGLG…VSLV), 69–89 (IPVF…LMNA), 93–113 (GLYL…IIIG), 132–152 (FWMG…REII), and 182–202 (SFLL…LIAL).

This sequence belongs to the NqrDE/RnfAE family. In terms of assembly, the complex is composed of six subunits: RnfA, RnfB, RnfC, RnfD, RnfE and RnfG.

It is found in the cell inner membrane. Functionally, part of a membrane-bound complex that couples electron transfer with translocation of ions across the membrane. The chain is Ion-translocating oxidoreductase complex subunit E from Vibrio atlanticus (strain LGP32) (Vibrio splendidus (strain Mel32)).